The following is a 457-amino-acid chain: Aromatic amino acid permease FywP (457 aa).

A run of 12 helical transmembrane segments spans residues 16-36 (IVML…SGKV), 43-63 (SVLL…YGVG), 91-111 (FADW…EAGV), 114-134 (FLAI…VAVL), 154-174 (AFIK…LLVI), 205-225 (GFLT…LAAI), 243-263 (GVLI…LHLL), 292-312 (IVLV…IYAT), 342-362 (NAIL…AVLG), 373-393 (ISFT…VLYF), 403-423 (VKLA…MQII), and 424-444 (TNPW…YFSY).

Belongs to the amino acid-polyamine-organocation (APC) superfamily. Amino acid transporter (AAT) (TC 2.A.3.1) family.

The protein localises to the cell membrane. Involved in phenylalanine and tyrosine uptake. Also has affinity for tryptophan. Plays no significant role in the excretion of accumulated phenylalanine. The protein is Aromatic amino acid permease FywP of Lactococcus lactis subsp. cremoris (strain MG1363).